The primary structure comprises 689 residues: DNA topoisomerase 1 (689 aa).

The 111-residue stretch at 3 to 113 folds into the Toprim domain; it reads DNLVIVESPA…KENRVVFNEI (111 aa). Residues E9 and D82 each contribute to the Mg(2+) site. In terms of domain architecture, Topo IA-type catalytic spans 129–557; the sequence is EMDLVDAQQA…FYNSFKQDVE (429 aa). The segment at 163-168 is interaction with DNA; that stretch reads SAGRVQ. Y298 acts as the O-(5'-phospho-DNA)-tyrosine intermediate in catalysis. 3 consecutive C4-type zinc fingers follow at residues 577–603, 617–645, and 658–681; these read CEVCGSPMVIKMGRYGKFMACSNFPDC, CPKCNEGDVVERKSKKNRIFYGCSRYPEC, and CPKCHHYLVNKKKGKSSQVVCSNC.

The protein belongs to the type IA topoisomerase family. Monomer. It depends on Mg(2+) as a cofactor.

It catalyses the reaction ATP-independent breakage of single-stranded DNA, followed by passage and rejoining.. Its function is as follows. Releases the supercoiling and torsional tension of DNA, which is introduced during the DNA replication and transcription, by transiently cleaving and rejoining one strand of the DNA duplex. Introduces a single-strand break via transesterification at a target site in duplex DNA. The scissile phosphodiester is attacked by the catalytic tyrosine of the enzyme, resulting in the formation of a DNA-(5'-phosphotyrosyl)-enzyme intermediate and the expulsion of a 3'-OH DNA strand. The free DNA strand then undergoes passage around the unbroken strand, thus removing DNA supercoils. Finally, in the religation step, the DNA 3'-OH attacks the covalent intermediate to expel the active-site tyrosine and restore the DNA phosphodiester backbone. The protein is DNA topoisomerase 1 of Staphylococcus epidermidis (strain ATCC 35984 / DSM 28319 / BCRC 17069 / CCUG 31568 / BM 3577 / RP62A).